The sequence spans 199 residues: uncharacterized protein (199 aa).

The next 3 membrane-spanning stretches (helical) occupy residues Val-22 to Leu-44, Thr-65 to Leu-87, and His-91 to Trp-108.

The protein belongs to the ycf1 family.

Its subcellular location is the mitochondrion membrane. This is an uncharacterized protein from Arabidopsis thaliana (Mouse-ear cress).